Reading from the N-terminus, the 147-residue chain is Hemoglobin subunit beta-2 (147 aa).

Positions 3–147 constitute a Globin domain; the sequence is EWTDSERAII…VVSALGRQYH (145 aa). Residues H64 and H93 each coordinate heme b.

Belongs to the globin family. As to quaternary structure, hb 3 is a heterotetramer of two alpha-2 and two beta-2 chains. In terms of tissue distribution, red blood cells.

Its function is as follows. Involved in oxygen transport from gills to the various peripheral tissues. This is Hemoglobin subunit beta-2 (hbb2) from Arctogadus glacialis (Arctic cod).